A 1224-amino-acid chain; its full sequence is ATP-dependent helicase/nuclease subunit A (1224 aa).

The UvrD-like helicase ATP-binding domain occupies Val-15–Arg-480. Ala-36–Thr-43 serves as a coordination point for ATP. Positions Glu-497 to Gly-791 constitute a UvrD-like helicase C-terminal domain.

It belongs to the helicase family. AddA subfamily. As to quaternary structure, heterodimer of AddA and AddB/RexB. Mg(2+) serves as cofactor.

It catalyses the reaction Couples ATP hydrolysis with the unwinding of duplex DNA by translocating in the 3'-5' direction.. The enzyme catalyses ATP + H2O = ADP + phosphate + H(+). The heterodimer acts as both an ATP-dependent DNA helicase and an ATP-dependent, dual-direction single-stranded exonuclease. Recognizes the chi site generating a DNA molecule suitable for the initiation of homologous recombination. The AddA nuclease domain is required for chi fragment generation; this subunit has the helicase and 3' -&gt; 5' nuclease activities. The sequence is that of ATP-dependent helicase/nuclease subunit A from Staphylococcus epidermidis (strain ATCC 12228 / FDA PCI 1200).